A 506-amino-acid polypeptide reads, in one-letter code: ESX-5 secretion system ATPase EccB5 (506 aa).

The chain crosses the membrane as a helical span at residues 56-76 (VVASVSAALVICLGALLWSFI).

It belongs to the EccB family. In terms of assembly, part of the ESX-5 / type VII secretion system (T7SS), which is composed of cytosolic and membrane components. The ESX-5 membrane complex is composed of EccB5, EccC5, EccD5 and EccE5.

It localises to the cell inner membrane. Functionally, an ATPase. Part of the ESX-5 specialized secretion system, which is responsible for the secretion of EsxN and a number of PE_PGRS and PPE proteins, including PPE41. In Mycobacterium tuberculosis (strain CDC 1551 / Oshkosh), this protein is ESX-5 secretion system ATPase EccB5.